The primary structure comprises 38 residues: Large ribosomal subunit protein bL36 (38 aa).

It belongs to the bacterial ribosomal protein bL36 family.

The polypeptide is Large ribosomal subunit protein bL36 (Phytoplasma australiense).